Here is a 548-residue protein sequence, read N- to C-terminus: Eukaryotic translation initiation factor 3 subunit D (548 aa).

Lysine 53 carries the post-translational modification N6-acetyllysine. At serine 161 the chain carries Phosphoserine. The segment at 285 to 299 is RNA gate; sequence DFDLLTVSETANEPP. The disordered stretch occupies residues 523–548; that stretch reads PDGTFSSEEDEEDEEEEEEEEEEEET. A phosphoserine mark is found at serine 528 and serine 529. Positions 529-548 are enriched in acidic residues; that stretch reads SEEDEEDEEEEEEEEEEEET.

The protein belongs to the eIF-3 subunit D family. In terms of assembly, component of the eukaryotic translation initiation factor 3 (eIF-3) complex, which is composed of 13 subunits: EIF3A, EIF3B, EIF3C, EIF3D, EIF3E, EIF3F, EIF3G, EIF3H, EIF3I, EIF3J, EIF3K, EIF3L and EIF3M. The eIF-3 complex appears to include 3 stable modules: module A is composed of EIF3A, EIF3B, EIF3G and EIF3I; module B is composed of EIF3F, EIF3H, and EIF3M; and module C is composed of EIF3C, EIF3D, EIF3E, EIF3K and EIF3L. EIF3C of module C binds EIF3B of module A and EIF3H of module B, thereby linking the three modules. EIF3J is a labile subunit that binds to the eIF-3 complex via EIF3B. The eIF-3 complex may interact with RPS6KB1 under conditions of nutrient depletion. Mitogenic stimulation may lead to binding and activation of a complex composed of MTOR and RPTOR, leading to phosphorylation and release of RPS6KB1 and binding of EIF4B to eIF-3.

The protein localises to the cytoplasm. Its function is as follows. mRNA cap-binding component of the eukaryotic translation initiation factor 3 (eIF-3) complex, a complex required for several steps in the initiation of protein synthesis of a specialized repertoire of mRNAs. The eIF-3 complex associates with the 40S ribosome and facilitates the recruitment of eIF-1, eIF-1A, eIF-2:GTP:methionyl-tRNAi and eIF-5 to form the 43S pre-initiation complex (43S PIC). The eIF-3 complex stimulates mRNA recruitment to the 43S PIC and scanning of the mRNA for AUG recognition. The eIF-3 complex is also required for disassembly and recycling of post-termination ribosomal complexes and subsequently prevents premature joining of the 40S and 60S ribosomal subunits prior to initiation. The eIF-3 complex specifically targets and initiates translation of a subset of mRNAs involved in cell proliferation, including cell cycling, differentiation and apoptosis, and uses different modes of RNA stem-loop binding to exert either translational activation or repression. In the eIF-3 complex, EIF3D specifically recognizes and binds the 7-methylguanosine cap of a subset of mRNAs. The chain is Eukaryotic translation initiation factor 3 subunit D (Eif3d) from Mus musculus (Mouse).